A 179-amino-acid polypeptide reads, in one-letter code: Protein HEADING DATE 3A (179 aa).

It belongs to the phosphatidylethanolamine-binding protein family. As to expression, expressed in the inner region of the SAM, stem and leaf blade vascular tissues (at protein level).

Its subcellular location is the cytoplasm. It is found in the nucleus. Its function is as follows. Probable mobile flower-promoting signal (florigen) that moves from the leaf to the shoot apical meristem (SAM) and induces flowering. Promotes the transition from vegetative growth to flowering downstream of HD1 and EHD1 under short day (SD) conditions. Acts upstream of MADS14 and MADS15. The sequence is that of Protein HEADING DATE 3A (HD3A) from Oryza sativa subsp. japonica (Rice).